Here is a 126-residue protein sequence, read N- to C-terminus: Aspartate 1-decarboxylase (126 aa).

Catalysis depends on Ser-25, which acts as the Schiff-base intermediate with substrate; via pyruvic acid. The residue at position 25 (Ser-25) is a Pyruvic acid (Ser). Thr-57 provides a ligand contact to substrate. Tyr-58 acts as the Proton donor in catalysis. Residue 73–75 (GGA) coordinates substrate.

This sequence belongs to the PanD family. Heterooctamer of four alpha and four beta subunits. Pyruvate is required as a cofactor. Post-translationally, is synthesized initially as an inactive proenzyme, which is activated by self-cleavage at a specific serine bond to produce a beta-subunit with a hydroxyl group at its C-terminus and an alpha-subunit with a pyruvoyl group at its N-terminus.

The protein localises to the cytoplasm. It catalyses the reaction L-aspartate + H(+) = beta-alanine + CO2. It participates in cofactor biosynthesis; (R)-pantothenate biosynthesis; beta-alanine from L-aspartate: step 1/1. Its function is as follows. Catalyzes the pyruvoyl-dependent decarboxylation of aspartate to produce beta-alanine. This Stenotrophomonas maltophilia (strain K279a) protein is Aspartate 1-decarboxylase.